The primary structure comprises 336 residues: Probable GTPase MT1543 (336 aa).

GTP is bound by residues 67–75 (GVPGVGKST), Asp209, and 245–247 (SAV).

This sequence belongs to the SIMIBI class G3E GTPase family. ArgK/MeaB subfamily. As to quaternary structure, homodimer.

Functionally, probable GTPase. May also bind and hydrolyze ATP. May function as chaperone. In Mycobacterium tuberculosis (strain CDC 1551 / Oshkosh), this protein is Probable GTPase MT1543.